The primary structure comprises 233 residues: 5'-methylthioadenosine/S-adenosylhomocysteine nucleosidase (233 aa).

Glu-12 serves as the catalytic Proton acceptor. Substrate contacts are provided by residues Gly-78, Ile-152, and 173-174 (ME). Residue Asp-197 is the Proton donor of the active site.

This sequence belongs to the PNP/UDP phosphorylase family. MtnN subfamily. In terms of assembly, homodimer.

It carries out the reaction S-adenosyl-L-homocysteine + H2O = S-(5-deoxy-D-ribos-5-yl)-L-homocysteine + adenine. The catalysed reaction is S-methyl-5'-thioadenosine + H2O = 5-(methylsulfanyl)-D-ribose + adenine. The enzyme catalyses 5'-deoxyadenosine + H2O = 5-deoxy-D-ribose + adenine. It participates in amino-acid biosynthesis; L-methionine biosynthesis via salvage pathway; S-methyl-5-thio-alpha-D-ribose 1-phosphate from S-methyl-5'-thioadenosine (hydrolase route): step 1/2. Catalyzes the irreversible cleavage of the glycosidic bond in both 5'-methylthioadenosine (MTA) and S-adenosylhomocysteine (SAH/AdoHcy) to adenine and the corresponding thioribose, 5'-methylthioribose and S-ribosylhomocysteine, respectively. Also cleaves 5'-deoxyadenosine, a toxic by-product of radical S-adenosylmethionine (SAM) enzymes, into 5-deoxyribose and adenine. Thus, is required for in vivo function of the radical SAM enzymes biotin synthase and lipoic acid synthase, that are inhibited by 5'-deoxyadenosine accumulation. In Yersinia pseudotuberculosis serotype O:1b (strain IP 31758), this protein is 5'-methylthioadenosine/S-adenosylhomocysteine nucleosidase.